Here is a 283-residue protein sequence, read N- to C-terminus: Pantothenate synthetase (283 aa).

Residue 31-38 (MGALHEGH) participates in ATP binding. The active-site Proton donor is His38. Gln62 is a (R)-pantoate binding site. Gln62 is a binding site for beta-alanine. 148–151 (GKKD) is a binding site for ATP. Gln154 contacts (R)-pantoate. Residues Val177 and 185 to 188 (RSSR) contribute to the ATP site.

Belongs to the pantothenate synthetase family. Homodimer.

It is found in the cytoplasm. The catalysed reaction is (R)-pantoate + beta-alanine + ATP = (R)-pantothenate + AMP + diphosphate + H(+). The protein operates within cofactor biosynthesis; (R)-pantothenate biosynthesis; (R)-pantothenate from (R)-pantoate and beta-alanine: step 1/1. Functionally, catalyzes the condensation of pantoate with beta-alanine in an ATP-dependent reaction via a pantoyl-adenylate intermediate. In Staphylococcus haemolyticus (strain JCSC1435), this protein is Pantothenate synthetase.